The primary structure comprises 376 residues: Quinolinate synthase (376 aa).

Histidine 57 and serine 78 together coordinate iminosuccinate. Cysteine 123 serves as a coordination point for [4Fe-4S] cluster. Iminosuccinate is bound by residues 149-151 and serine 166; that span reads YAN. A [4Fe-4S] cluster-binding site is contributed by cysteine 210. Residues 236–238 and threonine 253 contribute to the iminosuccinate site; that span reads HPE. Cysteine 307 serves as a coordination point for [4Fe-4S] cluster.

It belongs to the quinolinate synthase family. Type 1 subfamily. The cofactor is [4Fe-4S] cluster.

Its subcellular location is the cytoplasm. The enzyme catalyses iminosuccinate + dihydroxyacetone phosphate = quinolinate + phosphate + 2 H2O + H(+). The protein operates within cofactor biosynthesis; NAD(+) biosynthesis; quinolinate from iminoaspartate: step 1/1. Functionally, catalyzes the condensation of iminoaspartate with dihydroxyacetone phosphate to form quinolinate. The chain is Quinolinate synthase from Paraburkholderia phymatum (strain DSM 17167 / CIP 108236 / LMG 21445 / STM815) (Burkholderia phymatum).